The primary structure comprises 383 residues: MQRTPAMRVLVPALLVAISALSGCGKSEAPPPAQTPEVGIVTLEAQTVTLNTELPGRTNAFRIAEVRPQVNGIILKRLFKEGSDVKAGQQLYQIDPATYEADYQSAQANLASTQEQAQRYKLLVADQAVSKQQYADANAAYLQSKAAVEQARINLRYTKVLSPISGRIGRSAVTEGALVTNGQANAMATVQQLDPIYVDVTQPSTALLRLRRELASGQLERAGDNAAKVSLKLEDGSQYPLEGRLEFSEVSVDEGTGSVTIRAVFPNPNNELLPGMFVHAQLQEGVKQKAILAPQQGVTRDLKGQATALVVNAQNKVELRVIKADRVIGDKWLVTEGLNAGDKIITEGLQFVQPGVEVKTVPAKNVASAQKADAAPAKTDSKG.

An N-terminal signal peptide occupies residues 1–23 (MQRTPAMRVLVPALLVAISALSG). C24 is lipidated: N-palmitoyl cysteine. C24 carries the S-diacylglycerol cysteine lipid modification. The stretch at 97–151 (ATYEADYQSAQANLASTQEQAQRYKLLVADQAVSKQQYADANAAYLQSKAAVEQA) forms a coiled coil.

It belongs to the membrane fusion protein (MFP) (TC 8.A.1) family. Component of the MexAB-OprM multidrug efflux complex, composed of six MexA subunits forming a hexameric tube, binding to a MexB trimer, which interact with the trimeric OprM outer membrane channel protein. OprM is thought to not directly contact MexB; instead, MexA joins MexB and OprM by forming a funnel-like hexamer anchored to the inner membrane. MexA may initially form a hexameric ring complex with MexB prior to OprM, then OprM undergoes a conformational change as it contacts MexA, allowing the periplasmic gate to open. It is thought that, under high intracellular substrate concentration, MexB ejects substrate into the tunnel formed by MexA-OprM; as the substrate level declines, conformational changes in MexB cause efflux to reduce and stop and the complex shifts to the closed state. MexB subunit acts as a substrate:proton antiporter and activity is enhanced significantly when in complex with MexA and OprM, in vitro.

The protein localises to the cell inner membrane. Its activity is regulated as follows. Export of antibiotics and solvents is dramatically decreased in the presence of the protonophore carbonyl cyanide m-chlorophenylhydrazone (CCCP), therefore may be driven by a proton gradient. Antibiotic efflux is inhibited by pyridopyrimidine derivatives, such as ABI-PP, acting by binding to a hydrophobic pocket in MexB. The periplasmic linker component of the MexAB-OprM efflux system that confers multidrug resistance. Functions as the major efflux pump for n-hexane and p-xylene efflux. Has been shown in one study to be involved in the active efflux of the autoinducer N-(3-oxododecanoyl) homoserine lactone, thereby playing an indirect role in quorum-sensing; but has been shown in another study not to be involved in efflux of this autoinducer. Over-expression of the pump increases antibiotic and solvent efflux capacities. Implicated in the secretion of the siderophore pyoverdine. The protein is Multidrug resistance protein MexA (mexA) of Pseudomonas aeruginosa (strain ATCC 15692 / DSM 22644 / CIP 104116 / JCM 14847 / LMG 12228 / 1C / PRS 101 / PAO1).